We begin with the raw amino-acid sequence, 260 residues long: GTP cyclohydrolase FolE2 (260 aa).

It belongs to the GTP cyclohydrolase IV family.

The catalysed reaction is GTP + H2O = 7,8-dihydroneopterin 3'-triphosphate + formate + H(+). The protein operates within cofactor biosynthesis; 7,8-dihydroneopterin triphosphate biosynthesis; 7,8-dihydroneopterin triphosphate from GTP: step 1/1. In terms of biological role, converts GTP to 7,8-dihydroneopterin triphosphate. The protein is GTP cyclohydrolase FolE2 of Desulfosudis oleivorans (strain DSM 6200 / JCM 39069 / Hxd3) (Desulfococcus oleovorans).